The sequence spans 299 residues: Oxygen-dependent coproporphyrinogen-III oxidase (299 aa).

Ser-92 is a binding site for substrate. The a divalent metal cation site is built by His-96 and His-106. His-106 (proton donor) is an active-site residue. Asn-108–Arg-110 contacts substrate. A divalent metal cation-binding residues include His-145 and His-175. Residues Tyr-240–Glu-275 are important for dimerization. Position 258–260 (Gly-258–Arg-260) interacts with substrate.

It belongs to the aerobic coproporphyrinogen-III oxidase family. In terms of assembly, homodimer. Requires a divalent metal cation as cofactor.

The protein localises to the cytoplasm. The enzyme catalyses coproporphyrinogen III + O2 + 2 H(+) = protoporphyrinogen IX + 2 CO2 + 2 H2O. It functions in the pathway porphyrin-containing compound metabolism; protoporphyrin-IX biosynthesis; protoporphyrinogen-IX from coproporphyrinogen-III (O2 route): step 1/1. Its function is as follows. Involved in the heme biosynthesis. Catalyzes the aerobic oxidative decarboxylation of propionate groups of rings A and B of coproporphyrinogen-III to yield the vinyl groups in protoporphyrinogen-IX. This is Oxygen-dependent coproporphyrinogen-III oxidase from Salmonella newport (strain SL254).